The chain runs to 98 residues: NADH-ubiquinone oxidoreductase chain 4L (98 aa).

3 helical membrane passes run 1–21 (MPYI…GTLM), 29–49 (SLLC…LLSL), and 61–81 (LILL…LIMI).

It belongs to the complex I subunit 4L family. In terms of assembly, core subunit of respiratory chain NADH dehydrogenase (Complex I) which is composed of 45 different subunits.

It is found in the mitochondrion inner membrane. The enzyme catalyses a ubiquinone + NADH + 5 H(+)(in) = a ubiquinol + NAD(+) + 4 H(+)(out). In terms of biological role, core subunit of the mitochondrial membrane respiratory chain NADH dehydrogenase (Complex I) which catalyzes electron transfer from NADH through the respiratory chain, using ubiquinone as an electron acceptor. Part of the enzyme membrane arm which is embedded in the lipid bilayer and involved in proton translocation. The chain is NADH-ubiquinone oxidoreductase chain 4L (MT-ND4L) from Mammuthus primigenius (Siberian woolly mammoth).